The following is a 389-amino-acid chain: ATP phosphoribosyltransferase regulatory subunit (389 aa).

The protein belongs to the class-II aminoacyl-tRNA synthetase family. HisZ subfamily. Heteromultimer composed of HisG and HisZ subunits.

The protein localises to the cytoplasm. It functions in the pathway amino-acid biosynthesis; L-histidine biosynthesis; L-histidine from 5-phospho-alpha-D-ribose 1-diphosphate: step 1/9. Functionally, required for the first step of histidine biosynthesis. May allow the feedback regulation of ATP phosphoribosyltransferase activity by histidine. The polypeptide is ATP phosphoribosyltransferase regulatory subunit (Hydrogenovibrio crunogenus (strain DSM 25203 / XCL-2) (Thiomicrospira crunogena)).